We begin with the raw amino-acid sequence, 392 residues long: Formate-dependent phosphoribosylglycinamide formyltransferase (392 aa).

N(1)-(5-phospho-beta-D-ribosyl)glycinamide contacts are provided by residues 22 to 23 (EL) and glutamate 82. Residues arginine 114, lysine 155, 160-165 (SSGKGQ), 195-198 (EGVV), and glutamate 203 contribute to the ATP site. Residues 119 to 308 (RLAAEELQLP…EFALHVRAFL (190 aa)) form the ATP-grasp domain. The Mg(2+) site is built by glutamate 267 and glutamate 279. N(1)-(5-phospho-beta-D-ribosyl)glycinamide-binding positions include aspartate 286, lysine 355, and 362–363 (RR).

Belongs to the PurK/PurT family. In terms of assembly, homodimer.

The catalysed reaction is N(1)-(5-phospho-beta-D-ribosyl)glycinamide + formate + ATP = N(2)-formyl-N(1)-(5-phospho-beta-D-ribosyl)glycinamide + ADP + phosphate + H(+). It participates in purine metabolism; IMP biosynthesis via de novo pathway; N(2)-formyl-N(1)-(5-phospho-D-ribosyl)glycinamide from N(1)-(5-phospho-D-ribosyl)glycinamide (formate route): step 1/1. Functionally, involved in the de novo purine biosynthesis. Catalyzes the transfer of formate to 5-phospho-ribosyl-glycinamide (GAR), producing 5-phospho-ribosyl-N-formylglycinamide (FGAR). Formate is provided by PurU via hydrolysis of 10-formyl-tetrahydrofolate. In Escherichia coli O157:H7, this protein is Formate-dependent phosphoribosylglycinamide formyltransferase.